We begin with the raw amino-acid sequence, 288 residues long: Thymidylate synthase (288 aa).

DUMP is bound at residue R21. H51 contacts (6R)-5,10-methylene-5,6,7,8-tetrahydrofolate. 150–151 (RR) is a dUMP binding site. Catalysis depends on C170, which acts as the Nucleophile. Residues 190–193 (RSGD), N201, and 231–233 (HIY) contribute to the dUMP site. D193 is a binding site for (6R)-5,10-methylene-5,6,7,8-tetrahydrofolate. A287 provides a ligand contact to (6R)-5,10-methylene-5,6,7,8-tetrahydrofolate.

The protein belongs to the thymidylate synthase family. Bacterial-type ThyA subfamily. In terms of assembly, homodimer.

The protein localises to the cytoplasm. It carries out the reaction dUMP + (6R)-5,10-methylene-5,6,7,8-tetrahydrofolate = 7,8-dihydrofolate + dTMP. The protein operates within pyrimidine metabolism; dTTP biosynthesis. Catalyzes the reductive methylation of 2'-deoxyuridine-5'-monophosphate (dUMP) to 2'-deoxythymidine-5'-monophosphate (dTMP) while utilizing 5,10-methylenetetrahydrofolate (mTHF) as the methyl donor and reductant in the reaction, yielding dihydrofolate (DHF) as a by-product. This enzymatic reaction provides an intracellular de novo source of dTMP, an essential precursor for DNA biosynthesis. The polypeptide is Thymidylate synthase (Mycoplasma mobile (strain ATCC 43663 / 163K / NCTC 11711) (Mesomycoplasma mobile)).